Reading from the N-terminus, the 325-residue chain is Ribonuclease Z (325 aa).

Residues His-63, His-65, Asp-67, His-68, His-147, Asp-218, and His-276 each contribute to the Zn(2+) site. Catalysis depends on Asp-67, which acts as the Proton acceptor.

It belongs to the RNase Z family. In terms of assembly, homodimer. Requires Zn(2+) as cofactor.

The catalysed reaction is Endonucleolytic cleavage of RNA, removing extra 3' nucleotides from tRNA precursor, generating 3' termini of tRNAs. A 3'-hydroxy group is left at the tRNA terminus and a 5'-phosphoryl group is left at the trailer molecule.. In terms of biological role, zinc phosphodiesterase, which displays some tRNA 3'-processing endonuclease activity. Probably involved in tRNA maturation, by removing a 3'-trailer from precursor tRNA. The chain is Ribonuclease Z from Oenococcus oeni (strain ATCC BAA-331 / PSU-1).